Here is a 330-residue protein sequence, read N- to C-terminus: D-alanine--D-alanine ligase (330 aa).

An ATP-grasp domain is found at 120–326 (KLWYDALGIP…FKTFLQKAVL (207 aa)). 150-205 (AFKQWGGLFVKAACQGSSVGCYKVTSEAELSKAINDAFGYSQQVLVEKAVKPRELE) contributes to the ATP binding site. 3 residues coordinate Mg(2+): Asp-280, Glu-293, and Asn-295.

This sequence belongs to the D-alanine--D-alanine ligase family. Mg(2+) serves as cofactor. The cofactor is Mn(2+).

It is found in the cytoplasm. It carries out the reaction 2 D-alanine + ATP = D-alanyl-D-alanine + ADP + phosphate + H(+). The protein operates within cell wall biogenesis; peptidoglycan biosynthesis. Its function is as follows. Cell wall formation. In Aliivibrio fischeri (strain ATCC 700601 / ES114) (Vibrio fischeri), this protein is D-alanine--D-alanine ligase.